The primary structure comprises 477 residues: Glycogen synthase (477 aa).

Lys-15 is a binding site for ADP-alpha-D-glucose.

It belongs to the glycosyltransferase 1 family. Bacterial/plant glycogen synthase subfamily.

It carries out the reaction [(1-&gt;4)-alpha-D-glucosyl](n) + ADP-alpha-D-glucose = [(1-&gt;4)-alpha-D-glucosyl](n+1) + ADP + H(+). The protein operates within glycan biosynthesis; glycogen biosynthesis. In terms of biological role, synthesizes alpha-1,4-glucan chains using ADP-glucose. The chain is Glycogen synthase from Shigella flexneri serotype 5b (strain 8401).